The primary structure comprises 346 residues: tRNA N6-adenosine threonylcarbamoyltransferase (346 aa).

H111 and H115 together coordinate Fe cation. Substrate contacts are provided by residues 134–138 (LVSGG), D167, G180, and N279. D307 is a Fe cation binding site.

This sequence belongs to the KAE1 / TsaD family. The cofactor is Fe(2+).

The protein resides in the cytoplasm. The catalysed reaction is L-threonylcarbamoyladenylate + adenosine(37) in tRNA = N(6)-L-threonylcarbamoyladenosine(37) in tRNA + AMP + H(+). Required for the formation of a threonylcarbamoyl group on adenosine at position 37 (t(6)A37) in tRNAs that read codons beginning with adenine. Is involved in the transfer of the threonylcarbamoyl moiety of threonylcarbamoyl-AMP (TC-AMP) to the N6 group of A37, together with TsaE and TsaB. TsaD likely plays a direct catalytic role in this reaction. This Burkholderia thailandensis (strain ATCC 700388 / DSM 13276 / CCUG 48851 / CIP 106301 / E264) protein is tRNA N6-adenosine threonylcarbamoyltransferase.